The following is a 223-amino-acid chain: Deoxyribose-phosphate aldolase (223 aa).

The Proton donor/acceptor role is filled by Asp89. Lys152 (schiff-base intermediate with acetaldehyde) is an active-site residue. Lys181 serves as the catalytic Proton donor/acceptor.

The protein belongs to the DeoC/FbaB aldolase family. DeoC type 1 subfamily.

The protein resides in the cytoplasm. It catalyses the reaction 2-deoxy-D-ribose 5-phosphate = D-glyceraldehyde 3-phosphate + acetaldehyde. The protein operates within carbohydrate degradation; 2-deoxy-D-ribose 1-phosphate degradation; D-glyceraldehyde 3-phosphate and acetaldehyde from 2-deoxy-alpha-D-ribose 1-phosphate: step 2/2. Catalyzes a reversible aldol reaction between acetaldehyde and D-glyceraldehyde 3-phosphate to generate 2-deoxy-D-ribose 5-phosphate. This chain is Deoxyribose-phosphate aldolase, found in Listeria welshimeri serovar 6b (strain ATCC 35897 / DSM 20650 / CCUG 15529 / CIP 8149 / NCTC 11857 / SLCC 5334 / V8).